The sequence spans 95 residues: Aspartyl/glutamyl-tRNA(Asn/Gln) amidotransferase subunit C (95 aa).

It belongs to the GatC family. In terms of assembly, heterotrimer of A, B and C subunits.

The catalysed reaction is L-glutamyl-tRNA(Gln) + L-glutamine + ATP + H2O = L-glutaminyl-tRNA(Gln) + L-glutamate + ADP + phosphate + H(+). It catalyses the reaction L-aspartyl-tRNA(Asn) + L-glutamine + ATP + H2O = L-asparaginyl-tRNA(Asn) + L-glutamate + ADP + phosphate + 2 H(+). In terms of biological role, allows the formation of correctly charged Asn-tRNA(Asn) or Gln-tRNA(Gln) through the transamidation of misacylated Asp-tRNA(Asn) or Glu-tRNA(Gln) in organisms which lack either or both of asparaginyl-tRNA or glutaminyl-tRNA synthetases. The reaction takes place in the presence of glutamine and ATP through an activated phospho-Asp-tRNA(Asn) or phospho-Glu-tRNA(Gln). This chain is Aspartyl/glutamyl-tRNA(Asn/Gln) amidotransferase subunit C, found in Clostridium botulinum (strain ATCC 19397 / Type A).